We begin with the raw amino-acid sequence, 147 residues long: Two-component response regulator ORR11 (147 aa).

A Response regulatory domain is found at 29–146 (HVLAVDDSSV…DVSRLFSRVL (118 aa)). Residue Asp-79 is modified to 4-aspartylphosphate.

It belongs to the ARR family. Type-A subfamily. Two-component system major event consists of a His-to-Asp phosphorelay between a sensor histidine kinase (HK) and a response regulator (RR). In plants, the His-to-Asp phosphorelay involves an additional intermediate named Histidine-containing phosphotransfer protein (HPt). This multistep phosphorelay consists of a His-Asp-His-Asp sequential transfer of a phosphate group between first a His and an Asp of the HK protein, followed by the transfer to a conserved His of the HPt protein and finally the transfer to an Asp in the receiver domain of the RR protein.

In terms of biological role, functions as a response regulator involved in His-to-Asp phosphorelay signal transduction system. Phosphorylation of the Asp residue in the receiver domain activates the ability of the protein to promote the transcription of target genes. Type-A response regulators seem to act as negative regulators of the cytokinin signaling. The chain is Two-component response regulator ORR11 from Oryza sativa subsp. indica (Rice).